A 179-amino-acid polypeptide reads, in one-letter code: ATP synthase subunit b, chloroplastic (179 aa).

A helical transmembrane segment spans residues 28–46; it reads IINIAALVGILIYAGRDFL.

This sequence belongs to the ATPase B chain family. As to quaternary structure, F-type ATPases have 2 components, F(1) - the catalytic core - and F(0) - the membrane proton channel. F(1) has five subunits: alpha(3), beta(3), gamma(1), delta(1), epsilon(1). F(0) has four main subunits: a(1), b(1), b'(1) and c(10-14). The alpha and beta chains form an alternating ring which encloses part of the gamma chain. F(1) is attached to F(0) by a central stalk formed by the gamma and epsilon chains, while a peripheral stalk is formed by the delta, b and b' chains.

The protein localises to the plastid. It localises to the chloroplast thylakoid membrane. F(1)F(0) ATP synthase produces ATP from ADP in the presence of a proton or sodium gradient. F-type ATPases consist of two structural domains, F(1) containing the extramembraneous catalytic core and F(0) containing the membrane proton channel, linked together by a central stalk and a peripheral stalk. During catalysis, ATP synthesis in the catalytic domain of F(1) is coupled via a rotary mechanism of the central stalk subunits to proton translocation. Its function is as follows. Component of the F(0) channel, it forms part of the peripheral stalk, linking F(1) to F(0). The sequence is that of ATP synthase subunit b, chloroplastic from Trieres chinensis (Marine centric diatom).